A 355-amino-acid polypeptide reads, in one-letter code: Probable nitronate monooxygenase (355 aa).

FMN-binding positions include Asn71, Gln175, Gly180, Gly218, and 237–240 (QMGT).

It belongs to the nitronate monooxygenase family. NMO class I subfamily. The cofactor is FMN.

The enzyme catalyses 3 propionate 3-nitronate + 3 O2 + H2O = 3 3-oxopropanoate + 2 nitrate + nitrite + H2O2 + 3 H(+). Its function is as follows. Nitronate monooxygenase that uses molecular oxygen to catalyze the oxidative denitrification of alkyl nitronates. Acts on propionate 3-nitronate (P3N), the presumed physiological substrate. Probably functions in the detoxification of P3N, a metabolic poison produced by plants and fungi as a defense mechanism. This chain is Probable nitronate monooxygenase, found in Staphylococcus aureus (strain JH1).